The following is a 341-amino-acid chain: L-threonine 3-dehydrogenase (341 aa).

Cys-38 lines the Zn(2+) pocket. Active-site charge relay system residues include Thr-40 and His-43. Zn(2+) contacts are provided by His-63, Glu-64, Cys-93, Cys-96, Cys-99, and Cys-107. NAD(+) is bound by residues Ile-175, Asp-195, Arg-200, 262-264 (LGI), and 286-287 (IY).

Belongs to the zinc-containing alcohol dehydrogenase family. Homotetramer. Zn(2+) is required as a cofactor.

The protein resides in the cytoplasm. It carries out the reaction L-threonine + NAD(+) = (2S)-2-amino-3-oxobutanoate + NADH + H(+). It functions in the pathway amino-acid degradation; L-threonine degradation via oxydo-reductase pathway; glycine from L-threonine: step 1/2. Functionally, catalyzes the NAD(+)-dependent oxidation of L-threonine to 2-amino-3-ketobutyrate. The protein is L-threonine 3-dehydrogenase of Alteromonas mediterranea (strain DSM 17117 / CIP 110805 / LMG 28347 / Deep ecotype).